Here is a 311-residue protein sequence, read N- to C-terminus: Catechol 1,2-dioxygenase 1 (311 aa).

The Fe cation site is built by Tyr-164, Tyr-200, His-224, and His-226.

This sequence belongs to the intradiol ring-cleavage dioxygenase family. In terms of assembly, homodimer. It depends on Fe(3+) as a cofactor.

It catalyses the reaction catechol + O2 = cis,cis-muconate + 2 H(+). Its pathway is aromatic compound metabolism; beta-ketoadipate pathway; 5-oxo-4,5-dihydro-2-furylacetate from catechol: step 1/3. In terms of biological role, can cleave 4-methyl-, 4-chloro-, and 3-methoxycatechol at lower rates than catechol, but has no activity with 4-nitrocatechol or protocatechuic acid. This Acinetobacter lwoffii protein is Catechol 1,2-dioxygenase 1 (catA1).